The sequence spans 2223 residues: Protein Ycf2 (2223 aa).

Glycine 1576–serine 1583 contributes to the ATP binding site.

It belongs to the Ycf2 family.

It is found in the plastid. It localises to the chloroplast stroma. Probable ATPase of unknown function. Its presence in a non-photosynthetic plant (Epifagus virginiana) and experiments in tobacco indicate that it has an essential function which is probably not related to photosynthesis. This is Protein Ycf2 from Silene latifolia (White campion).